The following is a 134-amino-acid chain: Holo-[acyl-carrier-protein] synthase (134 aa).

Mg(2+)-binding residues include D8 and E58.

The protein belongs to the P-Pant transferase superfamily. AcpS family. The cofactor is Mg(2+).

Its subcellular location is the cytoplasm. The catalysed reaction is apo-[ACP] + CoA = holo-[ACP] + adenosine 3',5'-bisphosphate + H(+). In terms of biological role, transfers the 4'-phosphopantetheine moiety from coenzyme A to a Ser of acyl-carrier-protein. This Ruminiclostridium cellulolyticum (strain ATCC 35319 / DSM 5812 / JCM 6584 / H10) (Clostridium cellulolyticum) protein is Holo-[acyl-carrier-protein] synthase.